The primary structure comprises 131 residues: Large ribosomal subunit protein bL19 (131 aa).

The segment at 112–131 is disordered; the sequence is KSARIAERAGGPKASASTEA.

This sequence belongs to the bacterial ribosomal protein bL19 family.

This protein is located at the 30S-50S ribosomal subunit interface and may play a role in the structure and function of the aminoacyl-tRNA binding site. This Caulobacter vibrioides (strain ATCC 19089 / CIP 103742 / CB 15) (Caulobacter crescentus) protein is Large ribosomal subunit protein bL19.